Consider the following 271-residue polypeptide: MSDMRLIVAGAGGRMGRALTRAIAESKGAVLAGALEAPGSEMLGKDAGVLAGLPANGIKLSADLWAMSKEADGILDFTVPAATIANVAIAAERGIVHVIGTTGLSGSDNAVIKSVTNRAVVVQSGNMSLGVNLLAAVVKRVAKALDQSFDIEIVETHHRMKIDAPSGTALMLGQAAAAGRGISLDEHADRGRDGITGARKPGNIGFASLRGGTAAGDHSVSFLGPFERLTLSHQAEDRMLFAHGALKAALWAHGKKPGHYSMADVLGLADI.

NAD(+)-binding positions include 10–15 (GAGGRM), Glu-36, 100–102 (GTT), and 124–127 (SGNM). The active-site Proton donor/acceptor is His-157. His-158 is a binding site for (S)-2,3,4,5-tetrahydrodipicolinate. The active-site Proton donor is Lys-161. 167 to 168 (GT) contacts (S)-2,3,4,5-tetrahydrodipicolinate.

The protein belongs to the DapB family.

Its subcellular location is the cytoplasm. The enzyme catalyses (S)-2,3,4,5-tetrahydrodipicolinate + NAD(+) + H2O = (2S,4S)-4-hydroxy-2,3,4,5-tetrahydrodipicolinate + NADH + H(+). The catalysed reaction is (S)-2,3,4,5-tetrahydrodipicolinate + NADP(+) + H2O = (2S,4S)-4-hydroxy-2,3,4,5-tetrahydrodipicolinate + NADPH + H(+). It functions in the pathway amino-acid biosynthesis; L-lysine biosynthesis via DAP pathway; (S)-tetrahydrodipicolinate from L-aspartate: step 4/4. Its function is as follows. Catalyzes the conversion of 4-hydroxy-tetrahydrodipicolinate (HTPA) to tetrahydrodipicolinate. The protein is 4-hydroxy-tetrahydrodipicolinate reductase of Bradyrhizobium diazoefficiens (strain JCM 10833 / BCRC 13528 / IAM 13628 / NBRC 14792 / USDA 110).